The sequence spans 103 residues: Large ribosomal subunit protein bL21 (103 aa).

The protein belongs to the bacterial ribosomal protein bL21 family. Part of the 50S ribosomal subunit. Contacts protein L20.

This protein binds to 23S rRNA in the presence of protein L20. The polypeptide is Large ribosomal subunit protein bL21 (Marinobacter nauticus (strain ATCC 700491 / DSM 11845 / VT8) (Marinobacter aquaeolei)).